Consider the following 495-residue polypeptide: Putative aldehyde dehydrogenase AldA (495 aa).

212-218 (GKGSESG) is an NAD(+) binding site. Residues Glu-256 and Cys-290 contribute to the active site.

It belongs to the aldehyde dehydrogenase family.

It catalyses the reaction an aldehyde + NAD(+) + H2O = a carboxylate + NADH + 2 H(+). The protein is Putative aldehyde dehydrogenase AldA (aldA) of Staphylococcus aureus (strain USA300).